Consider the following 438-residue polypeptide: Chromosomal replication initiator protein DnaA (438 aa).

Positions 1–68 are domain I, interacts with DnaA modulators; that stretch reads MKDNILSALK…VVKESLGKDA (68 aa). The domain II stretch occupies residues 68–98; the sequence is ATFEIVYKEIDITQENEEKGPLVRKRPLLIT. The interval 99–314 is domain III, AAA+ region; the sequence is PLNPKYTFEN…GAILKLIAYK (216 aa). ATP-binding residues include glycine 142, glycine 144, lysine 145, and threonine 146. The tract at residues 315–438 is domain IV, binds dsDNA; it reads NLYGSLNLSI…TKNFAQGESI (124 aa).

The protein belongs to the DnaA family. As to quaternary structure, oligomerizes as a right-handed, spiral filament on DNA at oriC.

Its subcellular location is the cytoplasm. Functionally, plays an essential role in the initiation and regulation of chromosomal replication. ATP-DnaA binds to the origin of replication (oriC) to initiate formation of the DNA replication initiation complex once per cell cycle. Binds the DnaA box (a 9 base pair repeat at the origin) and separates the double-stranded (ds)DNA. Forms a right-handed helical filament on oriC DNA; dsDNA binds to the exterior of the filament while single-stranded (ss)DNA is stabiized in the filament's interior. The ATP-DnaA-oriC complex binds and stabilizes one strand of the AT-rich DNA unwinding element (DUE), permitting loading of DNA polymerase. After initiation quickly degrades to an ADP-DnaA complex that is not apt for DNA replication. Binds acidic phospholipids. The chain is Chromosomal replication initiator protein DnaA from Thermosipho africanus (strain TCF52B).